Reading from the N-terminus, the 390-residue chain is tRNA(Met) cytidine acetate ligase (390 aa).

ATP-binding positions include 7–20 (ITEYNPFHNGHIYH), glycine 101, asparagine 152, and arginine 177.

The protein belongs to the TmcAL family.

It is found in the cytoplasm. It carries out the reaction cytidine(34) in elongator tRNA(Met) + acetate + ATP = N(4)-acetylcytidine(34) in elongator tRNA(Met) + AMP + diphosphate. Functionally, catalyzes the formation of N(4)-acetylcytidine (ac(4)C) at the wobble position of elongator tRNA(Met), using acetate and ATP as substrates. First activates an acetate ion to form acetyladenylate (Ac-AMP) and then transfers the acetyl group to tRNA to form ac(4)C34. This Leuconostoc mesenteroides subsp. mesenteroides (strain ATCC 8293 / DSM 20343 / BCRC 11652 / CCM 1803 / JCM 6124 / NCDO 523 / NBRC 100496 / NCIMB 8023 / NCTC 12954 / NRRL B-1118 / 37Y) protein is tRNA(Met) cytidine acetate ligase.